Reading from the N-terminus, the 91-residue chain is Small ribosomal subunit protein bS18 (91 aa).

Belongs to the bacterial ribosomal protein bS18 family. As to quaternary structure, part of the 30S ribosomal subunit. Forms a tight heterodimer with protein bS6.

In terms of biological role, binds as a heterodimer with protein bS6 to the central domain of the 16S rRNA, where it helps stabilize the platform of the 30S subunit. This is Small ribosomal subunit protein bS18 from Gluconacetobacter diazotrophicus (strain ATCC 49037 / DSM 5601 / CCUG 37298 / CIP 103539 / LMG 7603 / PAl5).